We begin with the raw amino-acid sequence, 333 residues long: Adenosine deaminase (333 aa).

Zn(2+) is bound by residues H12 and H14. Positions 14 and 16 each coordinate substrate. Residues 14–16, S141, and G170 each bind pentostatin; that span reads HLD. Position 170 (G170) interacts with substrate. H197 lines the Zn(2+) pocket. 3 residues coordinate pentostatin: E200, H221, and D278. The active-site Proton donor is the E200. D278 contributes to the Zn(2+) binding site. Substrate is bound at residue D279.

Belongs to the metallo-dependent hydrolases superfamily. Adenosine and AMP deaminases family. Adenosine deaminase subfamily. Zn(2+) is required as a cofactor.

The catalysed reaction is adenosine + H2O + H(+) = inosine + NH4(+). It catalyses the reaction 2'-deoxyadenosine + H2O + H(+) = 2'-deoxyinosine + NH4(+). In terms of biological role, catalyzes the hydrolytic deamination of adenosine and 2-deoxyadenosine. This chain is Adenosine deaminase, found in Salmonella typhimurium (strain LT2 / SGSC1412 / ATCC 700720).